A 159-amino-acid chain; its full sequence is Riboflavin kinase (159 aa).

38 to 43 contacts CDP; sequence GLGEGR. T67 and N69 together coordinate Mg(2+). Residues T126 and E134 each coordinate FMN. 139 to 142 lines the CDP pocket; the sequence is HKLR.

The protein belongs to the archaeal riboflavin kinase family. Mg(2+) is required as a cofactor.

It carries out the reaction riboflavin + CTP = CDP + FMN + H(+). It functions in the pathway cofactor biosynthesis; FMN biosynthesis; FMN from riboflavin (CTP route): step 1/1. In terms of biological role, catalyzes the CTP-dependent phosphorylation of riboflavin (vitamin B2) to form flavin mononucleotide (FMN). The protein is Riboflavin kinase of Sulfolobus acidocaldarius (strain ATCC 33909 / DSM 639 / JCM 8929 / NBRC 15157 / NCIMB 11770).